An 875-amino-acid polypeptide reads, in one-letter code: GATOR2 complex protein MIOS (875 aa).

WD repeat units lie at residues 58-100 (SDTP…NSKF), 111-155 (KHAR…TPDI), 182-221 (GQND…QKMF), 223-261 (NTKA…KPVL), 265-306 (EQPK…TPIG), and 395-437 (RLRA…KQYT). The C4-type zinc finger occupies 735-781 (VSCNFCGKSISYSCSAVPHQGRGFSQYGVSGSPTKSKVTSCPGCRKP). 2 residues coordinate Zn(2+): C737 and C740. A phosphoserine mark is found at S759 and S766. Zn(2+)-binding residues include C775, C778, C788, C827, C830, H832, H835, H838, C849, C854, and C858. The RING-type; atypical zinc-finger motif lies at 782–863 (LPRCALCLIN…CTCKCMQLDT (82 aa)).

Belongs to the WD repeat mio family. In terms of assembly, component of the GATOR2 subcomplex, composed of MIOS, SEC13, SEH1L, WDR24 and WDR59. The GATOR2 complex interacts with CASTOR1 and CASTOR2; the interaction is negatively regulated by arginine. CASTOR1 and CASTOR2 convey leucine availability via direct interaction with MIOS. The GATOR2 complex interacts with SESN1, SESN2 and SESN3; the interaction is negatively regulated by amino acids. Interacts with SAR1A and SAR1B; the interaction is direct, disrupted by leucine and mediates the interaction of SAR1A or SAR1B with the GATOR2 complex to negatively regulate the TORC1 signaling upon leucine deprivation.

The protein resides in the lysosome membrane. Its activity is regulated as follows. The GATOR2 complex is negatively regulated by the upstream amino acid sensors CASTOR1 and SESN2, which sequester the GATOR2 complex in absence of amino acids. In the presence of abundant amino acids, GATOR2 is released from CASTOR1 and SESN2 and activated. Functionally, as a component of the GATOR2 complex, functions as an activator of the amino acid-sensing branch of the mTORC1 signaling pathway. The GATOR2 complex indirectly activates mTORC1 through the inhibition of the GATOR1 subcomplex. GATOR2 probably acts as an E3 ubiquitin-protein ligase toward GATOR1. In the presence of abundant amino acids, the GATOR2 complex mediates ubiquitination of the NPRL2 core component of the GATOR1 complex, leading to GATOR1 inactivation. In the absence of amino acids, GATOR2 is inhibited, activating the GATOR1 complex. Within the GATOR2 complex, MIOS is required to prevent autoubiquitination of WDR24, the catalytic subunit of the complex. The GATOR2 complex is required for brain myelination. The sequence is that of GATOR2 complex protein MIOS from Homo sapiens (Human).